The following is a 348-amino-acid chain: Putative 4-hydroxythreonine-4-phosphate dehydrogenase 2 (348 aa).

A divalent metal cation contacts are provided by His180, His224, and His279.

This sequence belongs to the PdxA family. In terms of assembly, homodimer. Zn(2+) serves as cofactor. Mg(2+) is required as a cofactor. The cofactor is Co(2+).

The protein resides in the cytoplasm. It carries out the reaction 4-(phosphooxy)-L-threonine + NAD(+) = 3-amino-2-oxopropyl phosphate + CO2 + NADH. The protein operates within cofactor biosynthesis; pyridoxine 5'-phosphate biosynthesis; pyridoxine 5'-phosphate from D-erythrose 4-phosphate: step 4/5. In terms of biological role, catalyzes the NAD(P)-dependent oxidation of 4-(phosphooxy)-L-threonine (HTP) into 2-amino-3-oxo-4-(phosphooxy)butyric acid which spontaneously decarboxylates to form 3-amino-2-oxopropyl phosphate (AHAP). This is Putative 4-hydroxythreonine-4-phosphate dehydrogenase 2 from Rhizobium meliloti (strain 1021) (Ensifer meliloti).